The chain runs to 230 residues: Ureidoacrylate amidohydrolase RutB (230 aa).

The active-site Proton acceptor is the Asp-24. Lys-133 is a catalytic residue. Cys-166 functions as the Nucleophile in the catalytic mechanism.

This sequence belongs to the isochorismatase family. RutB subfamily.

The catalysed reaction is (Z)-3-ureidoacrylate + H2O + H(+) = (Z)-3-aminoacrylate + NH4(+) + CO2. It carries out the reaction (Z)-3-ureidoacrylate + H2O = (Z)-3-aminoacrylate + carbamate + H(+). It catalyses the reaction (Z)-2-methylureidoacrylate + H2O + H(+) = (Z)-2-methylaminoacrylate + NH4(+) + CO2. In terms of biological role, hydrolyzes ureidoacrylate to form aminoacrylate and carbamate. The carbamate hydrolyzes spontaneously, thereby releasing one of the nitrogen atoms of the pyrimidine ring as ammonia and one of its carbon atoms as CO2. In Escherichia coli O111:H- (strain 11128 / EHEC), this protein is Ureidoacrylate amidohydrolase RutB.